Here is a 287-residue protein sequence, read N- to C-terminus: uncharacterized protein (287 aa).

Positions 183–281 (WEAARYLQEH…GISPIEYRKI (99 aa)) constitute an HTH araC/xylS-type domain. 2 consecutive DNA-binding regions (H-T-H motif) follow at residues 200–221 (KDLS…QQVL) and 248–271 (MGVI…KQIE).

This is an uncharacterized protein from Bacillus subtilis (strain 168).